Here is a 249-residue protein sequence, read N- to C-terminus: Coproheme decarboxylase (249 aa).

Residues Arg131, 145–149 (YPMDK), His172, Gln185, and Ser223 contribute to the Fe-coproporphyrin III site. Residue Tyr145 is part of the active site.

Belongs to the ChdC family. Type 1 subfamily. It depends on Fe-coproporphyrin III as a cofactor.

The enzyme catalyses Fe-coproporphyrin III + 2 H2O2 + 2 H(+) = heme b + 2 CO2 + 4 H2O. It catalyses the reaction Fe-coproporphyrin III + H2O2 + H(+) = harderoheme III + CO2 + 2 H2O. The catalysed reaction is harderoheme III + H2O2 + H(+) = heme b + CO2 + 2 H2O. It participates in porphyrin-containing compound metabolism; protoheme biosynthesis. In terms of biological role, involved in coproporphyrin-dependent heme b biosynthesis. Catalyzes the decarboxylation of Fe-coproporphyrin III (coproheme) to heme b (protoheme IX), the last step of the pathway. The reaction occurs in a stepwise manner with a three-propionate intermediate. This Halalkalibacterium halodurans (strain ATCC BAA-125 / DSM 18197 / FERM 7344 / JCM 9153 / C-125) (Bacillus halodurans) protein is Coproheme decarboxylase.